Here is a 91-residue protein sequence, read N- to C-terminus: Small ribosomal subunit protein uS19 (91 aa).

This sequence belongs to the universal ribosomal protein uS19 family.

Its function is as follows. Protein S19 forms a complex with S13 that binds strongly to the 16S ribosomal RNA. The chain is Small ribosomal subunit protein uS19 from Erythrobacter litoralis (strain HTCC2594).